The following is a 589-amino-acid chain: MNPSTSPNRNLASPKSLQLYTTGSEVAWYPTALDEANEIKSINSKAFSFKNQDQIYGAGSLKSRFSTHEISSEKNDSPDFTLVLPSNRLYIVIPGLMLSIFLAALDQTVITTAIPTIVANLDGGSSYSWIGTAYSLAETSILPFCGIMSEVVGRKIVLYTSIVLFLFGSAMCGAAQNMLWLVLCRAVQGIGGGGIMSLVTIVIADITPLQTRPYYTGCMGVTWGVASVMGPLIGGAISQNTTWRWIFFINLPTGGLSLALLIFFLNLVPKPTVSFCVFLRDFDFVGIVTITTGVVLFLLGLNIGSTTGHWAHANVLCYLIFGILCIAGFVVNELYTTRTRIIAPSAFQTLSLSSVMVTSFLHYYIMSTVTYYIPIYFQSIKGDGPLMSGVHTLSLAVVSSVVSAISGMGIGKLKNYRYPMIGGWIVLLAGTGSMIAIYYDTPIPRTMGFLALTAVGIGNLFQPNLIAIQASVPPALMATSCSAFMLLRNMGASVGISIGAVIYDQQLTTLLKGTEYSTGLSYSQIASIPSVSERNFVFNVYANAIRTIWIVNCPVAGVGMLLSFFTKQEKLSQSVTEYKEKDKGFKDAP.

14 helical membrane-spanning segments follow: residues 90–110 (YIVI…QTVI), 128–148 (SWIG…CGIM), 162–182 (IVLF…LWLV), 189–209 (GIGG…ITPL), 217–237 (GCMG…GGAI), 245–265 (WIFF…IFFL), 284–304 (FVGI…LNIG), 311–331 (AHAN…GFVV), 355–375 (VMVT…YIPI), 390–410 (VHTL…GMGI), 418–438 (YPMI…IAIY), 448–468 (GFLA…LIAI), 483–503 (AFML…AVIY), and 545–565 (IRTI…LSFF).

The protein belongs to the major facilitator superfamily. TCR/Tet family.

It localises to the membrane. This is an uncharacterized protein from Schizosaccharomyces pombe (strain 972 / ATCC 24843) (Fission yeast).